A 164-amino-acid polypeptide reads, in one-letter code: MANKLFLVCATLALCFLLTNASIYRTVVEFEEDDASNPVGPRQRCQKEFQQSQHLRACQRWMSKQMRQGRGGGPSLDDEFDFEGPQQGYQLLQQCCNELRQEEPVCVCPTLKQAARAVSLQGQHGPFQSRKIYQSAKYLPNICKIQQVGECPFQTTIPFFPPYY.

The first 21 residues, 1-21 (MANKLFLVCATLALCFLLTNA), serve as a signal peptide directing secretion. 2 consecutive propeptides follow at residues 22–37 (SIYRTVVEFEEDDASN) and 73–81 (GPSLDDEFD).

Belongs to the 2S seed storage albumins family. As to quaternary structure, the mature protein consists of a small and a large chain linked by disulfide bonds. Interacts with AHK2.

Its function is as follows. This is a 2S seed storage protein. The protein is 2S seed storage protein 3 (AT2S3) of Arabidopsis thaliana (Mouse-ear cress).